Consider the following 312-residue polypeptide: Pyridoxal kinase (312 aa).

N-acetylmethionine is present on Met-1. Pyridoxal-binding residues include Ser-12 and Thr-47. Thr-47 lines the pyridoxal 5'-phosphate pocket. Position 59 is a phosphoserine (Ser-59). Residue Asp-113 participates in ATP binding. Asp-113 contributes to the Na(+) binding site. Asp-118 is a Mg(2+) binding site. Thr-148 is a Na(+) binding site. ATP-binding positions include 150 to 153 and 186 to 187; these read NQFE and TS. Thr-186 is a binding site for Na(+). Ser-213 is modified (phosphoserine). Residues 226-228 and Thr-233 contribute to the ATP site; that span reads VDA. 234-235 provides a ligand contact to pyridoxal 5'-phosphate; sequence GD. The active-site Proton acceptor is the Asp-235. The residue at position 285 (Ser-285) is a Phosphoserine.

It belongs to the pyridoxine kinase family. As to quaternary structure, homodimer. Requires Zn(2+) as cofactor. The cofactor is Mg(2+).

It localises to the cytoplasm. The protein resides in the cytosol. It carries out the reaction pyridoxal + ATP = pyridoxal 5'-phosphate + ADP + H(+). The catalysed reaction is pyridoxamine + ATP = pyridoxamine 5'-phosphate + ADP + H(+). It catalyses the reaction pyridoxine + ATP = pyridoxine 5'-phosphate + ADP + H(+). It participates in cofactor metabolism; pyridoxal 5'-phosphate salvage; pyridoxal 5'-phosphate from pyridoxal: step 1/1. It functions in the pathway cofactor metabolism; pyridoxal 5'-phosphate salvage; pyridoxine 5'-phosphate from pyridoxine: step 1/1. Its pathway is cofactor metabolism; pyridoxal 5'-phosphate salvage; pyridoxamine 5'-phosphate from pyridoxamine: step 1/1. Activity is increased in the presence of K(+)or Na(+). In terms of biological role, catalyzes the phosphorylation of the dietary vitamin B6 vitamers pyridoxal (PL), pyridoxine (PN) and pyridoxamine (PM) to form pyridoxal 5'-phosphate (PLP), pyridoxine 5'-phosphate (PNP) and pyridoxamine 5'-phosphate (PMP), respectively. PLP is the active form of vitamin B6, and acts as a cofactor for over 140 different enzymatic reactions. This Bos taurus (Bovine) protein is Pyridoxal kinase (PDXK).